The sequence spans 272 residues: Iodotyrosine deiodinase (272 aa).

The chain crosses the membrane as a helical span at residues 5 to 25 (LSGVSYGLLAGILAMLIHLVY). Residues 82–86 (RRSVR), serine 110, and 110–111 (SG) each bind FMN. 3-iodo-L-tyrosine-binding residues include alanine 112, glutamate 139, tyrosine 143, and lysine 164. FMN-binding positions include 219–221 (TST) and arginine 261.

It belongs to the nitroreductase family. Requires FMN as cofactor.

It is found in the membrane. The catalysed reaction is 2 iodide + L-tyrosine + 2 NADP(+) = 3,5-diiodo-L-tyrosine + 2 NADPH + H(+). It carries out the reaction iodide + L-tyrosine + NADP(+) = 3-iodo-L-tyrosine + NADPH. It catalyses the reaction 3-iodo-L-tyrosine + iodide + NADP(+) = 3,5-diiodo-L-tyrosine + NADPH + H(+). The enzyme catalyses L-tyrosine + chloride + NADP(+) = 3-chloro-L-tyrosine + NADPH. The catalysed reaction is bromide + L-tyrosine + NADP(+) = 3-bromo-L-tyrosine + NADPH. Its function is as follows. Catalyzes the dehalogenation of halotyrosines such as 3,5-diiodo-L-tyrosine. Likely to also catalyze the dehalogenation of other halotyrosines such as 3-bromo-L-tyrosine, 3-chloro-L-tyrosine and 3-iodo-L-tyrosine. This Hydra vulgaris (Hydra) protein is Iodotyrosine deiodinase.